The following is a 420-amino-acid chain: tRNA(Ile)-lysidine synthase, chloroplastic (420 aa).

Residue 63–68 participates in ATP binding; sequence SGGQDS.

Belongs to the tRNA(Ile)-lysidine synthase family.

The protein localises to the plastid. It localises to the chloroplast. It carries out the reaction cytidine(34) in tRNA(Ile2) + L-lysine + ATP = lysidine(34) in tRNA(Ile2) + AMP + diphosphate + H(+). Functionally, ligates lysine onto the cytidine present at position 34 of the AUA codon-specific tRNA(Ile) that contains the anticodon CAU, in an ATP-dependent manner. Cytidine is converted to lysidine, thus changing the amino acid specificity of the tRNA from methionine to isoleucine. The sequence is that of tRNA(Ile)-lysidine synthase, chloroplastic from Zygnema circumcarinatum (Green alga).